The primary structure comprises 391 residues: Putative B3 domain-containing protein Os08g0325100 (391 aa).

The TF-B3 DNA-binding region spans 32 to 125; the sequence is GDFQHEIRGE…QFDVIIFDQV (94 aa). A disordered region spans residues 143 to 232; that stretch reads VQEGRTDATE…SSRAHPQPMP (90 aa). A compositionally biased stretch (polar residues) spans 172–226; sequence EGRTNATETLNSSRAHSQPMPMQTPATETLNSSRAHSQDMPMQSPATETLNSSRA.

It localises to the nucleus. The sequence is that of Putative B3 domain-containing protein Os08g0325100 from Oryza sativa subsp. japonica (Rice).